Here is a 184-residue protein sequence, read N- to C-terminus: dCTP deaminase (184 aa).

DCTP is bound at residue 107–112 (KSTYAR). E133 (proton donor/acceptor) is an active-site residue. Q152, Y166, and Q176 together coordinate dCTP.

It belongs to the dCTP deaminase family. Homotrimer.

The catalysed reaction is dCTP + H2O + H(+) = dUTP + NH4(+). It participates in pyrimidine metabolism; dUMP biosynthesis; dUMP from dCTP (dUTP route): step 1/2. In terms of biological role, catalyzes the deamination of dCTP to dUTP. The chain is dCTP deaminase from Herpetosiphon aurantiacus (strain ATCC 23779 / DSM 785 / 114-95).